The following is a 445-amino-acid chain: FAS-associated factor 2-B (445 aa).

The UBA domain maps to 12–48 (DQTEKLLQFQDLTGIESIDQCRQTLQQHNWNIETAVQ). A coiled-coil region spans residues 275–353 (SERLEREERN…ERKSECLPAE (79 aa)). Residues 302 to 355 (RADQEKERKKKEKQDQKRREEEEAQRKQMLEERKKRNLEEEKERKSECLPAEPV) form a disordered region. Over residues 303-348 (ADQEKERKKKEKQDQKRREEEEAQRKQMLEERKKRNLEEEKERKSE) the composition is skewed to basic and acidic residues. The region spanning 357–439 (DHPDNVKIIF…GLSQSQLLFV (83 aa)) is the UBX domain.

Its subcellular location is the cytoplasm. The protein localises to the lipid droplet. The protein resides in the endoplasmic reticulum. Its function is as follows. Plays an important role in endoplasmic reticulum-associated degradation (ERAD) that mediates ubiquitin-dependent degradation of misfolded endoplasmic reticulum proteins. Involved in inhibition of lipid droplet degradation. Involved in stress granule disassembly. In Xenopus laevis (African clawed frog), this protein is FAS-associated factor 2-B (faf2-b).